The sequence spans 356 residues: Chitin elicitor-binding protein (356 aa).

The N-terminal stretch at Met-1–Ala-28 is a signal peptide. A glycan (N-linked (GlcNAc...) asparagine) is linked at Asn-30. Intrachain disulfides connect Cys-33/Cys-100, Cys-41/Cys-164, Cys-98/Cys-162, and Cys-100/Cys-164. Pro-50 to Asn-51 serves as a coordination point for chitin. Asn-63 and Asn-89 each carry an N-linked (GlcNAc...) asparagine glycan. LysM domains follow at residues Pro-111–Ile-158 and Leu-175–Val-219. Chitin contacts are provided by residues Pro-117–Ala-123, Asn-142, Pro-145–Val-152, Thr-155, and Gly-182. Asn-151 carries N-linked (GlcNAc...) asparagine glycosylation. Residue Asn-184 is glycosylated (N-linked (GlcNAc...) asparagine). Chitin-binding positions include Ser-186 and Leu-211 to Met-213. 2 disulfides stabilise this stretch: Cys-224/Cys-257 and Cys-252/Cys-274. Asn-265, Asn-281, Asn-290, Asn-306, and Asn-319 each carry an N-linked (GlcNAc...) asparagine glycan. A helical transmembrane segment spans residues Arg-336–Leu-356.

Forms homooligomer. Interacts with CERK1. Binds to chitin oligosaccharide elicitor. Interacts with LYP4 and LYP6. N-glycosylated. As to expression, expressed in seedlings, roots, shoots, stems and flowers.

Its subcellular location is the cell membrane. Its function is as follows. Chitin elicitor-binding protein involved in the perception and transduction of chitin oligosaccharide elicitor signal for defense responses. This chain is Chitin elicitor-binding protein, found in Oryza sativa subsp. japonica (Rice).